The chain runs to 246 residues: Probable septum site-determining protein MinC (246 aa).

It belongs to the MinC family. Interacts with MinD and FtsZ.

Its function is as follows. Cell division inhibitor that blocks the formation of polar Z ring septums. Rapidly oscillates between the poles of the cell to destabilize FtsZ filaments that have formed before they mature into polar Z rings. Prevents FtsZ polymerization. This Lachnospira eligens (strain ATCC 27750 / DSM 3376 / VPI C15-48 / C15-B4) (Eubacterium eligens) protein is Probable septum site-determining protein MinC.